The sequence spans 476 residues: Aspartyl/glutamyl-tRNA(Asn/Gln) amidotransferase subunit B (476 aa).

It belongs to the GatB/GatE family. GatB subfamily. As to quaternary structure, heterotrimer of A, B and C subunits.

It carries out the reaction L-glutamyl-tRNA(Gln) + L-glutamine + ATP + H2O = L-glutaminyl-tRNA(Gln) + L-glutamate + ADP + phosphate + H(+). It catalyses the reaction L-aspartyl-tRNA(Asn) + L-glutamine + ATP + H2O = L-asparaginyl-tRNA(Asn) + L-glutamate + ADP + phosphate + 2 H(+). Its function is as follows. Allows the formation of correctly charged Asn-tRNA(Asn) or Gln-tRNA(Gln) through the transamidation of misacylated Asp-tRNA(Asn) or Glu-tRNA(Gln) in organisms which lack either or both of asparaginyl-tRNA or glutaminyl-tRNA synthetases. The reaction takes place in the presence of glutamine and ATP through an activated phospho-Asp-tRNA(Asn) or phospho-Glu-tRNA(Gln). The polypeptide is Aspartyl/glutamyl-tRNA(Asn/Gln) amidotransferase subunit B (Moorella thermoacetica (strain ATCC 39073 / JCM 9320)).